The primary structure comprises 556 residues: Putative D-arabinono-1,4-lactone oxidase (556 aa).

The FAD-binding PCMH-type domain occupies 47 to 217; the sequence is FTSLPELYIQ…TEVTFKAVPA (171 aa). His84 bears the Pros-8alpha-FAD histidine mark.

It belongs to the oxygen-dependent FAD-linked oxidoreductase family. FAD serves as cofactor.

Its subcellular location is the mitochondrion membrane. It catalyses the reaction D-arabinono-1,4-lactone + O2 = dehydro-D-arabinono-1,4-lactone + H2O2 + H(+). It participates in cofactor biosynthesis; D-erythroascorbate biosynthesis; dehydro-D-arabinono-1,4-lactone from D-arabinose: step 2/2. This is Putative D-arabinono-1,4-lactone oxidase (alo-1) from Neurospora crassa (strain ATCC 24698 / 74-OR23-1A / CBS 708.71 / DSM 1257 / FGSC 987).